We begin with the raw amino-acid sequence, 509 residues long: Meiotically up-regulated gene 157 protein (509 aa).

5 helical membrane-spanning segments follow: residues 4-24, 140-160, 296-316, 368-388, and 417-437; these read WQAILFFLFGIAFANNLNIPW, LATLILGAIQTQAEMLIQFPY, ACVLQYFIPANAMMVVELSHL, ILFMDDANVPSLLSLPYLGFV, and ISGIGGPHIGLRNVWPMSLIV.

Its subcellular location is the endoplasmic reticulum membrane. Has a role in meiosis. The chain is Meiotically up-regulated gene 157 protein (mug157) from Schizosaccharomyces pombe (strain 972 / ATCC 24843) (Fission yeast).